Reading from the N-terminus, the 104-residue chain is Replication restart protein PriB (104 aa).

Positions 1–101 constitute an SSB domain; that stretch reads MTNRLVLSGT…LHAEQIELID (101 aa).

It belongs to the PriB family. In terms of assembly, homodimer. Interacts with PriA and DnaT. Component of the replication restart primosome. Primosome assembly occurs via a 'hand-off' mechanism. PriA binds to replication forks, subsequently PriB then DnaT bind; DnaT then displaces ssDNA to generate the helicase loading substrate.

Involved in the restart of stalled replication forks, which reloads the replicative helicase on sites other than the origin of replication; the PriA-PriB pathway is the major replication restart pathway. During primosome assembly it facilitates complex formation between PriA and DnaT on DNA; stabilizes PriA on DNA. Stimulates the DNA unwinding activity of PriA helicase. In Shigella dysenteriae serotype 1 (strain Sd197), this protein is Replication restart protein PriB.